The primary structure comprises 532 residues: Putative F-box/LRR-repeat protein At3g42770 (532 aa).

An F-box domain is found at Met-1–Ser-46. 3 LRR repeats span residues Val-113 to Ser-135, Ile-279 to Met-305, and Met-398 to Leu-420.

This Arabidopsis thaliana (Mouse-ear cress) protein is Putative F-box/LRR-repeat protein At3g42770.